The following is a 314-amino-acid chain: Methionyl-tRNA formyltransferase (314 aa).

A (6S)-5,6,7,8-tetrahydrofolate-binding site is contributed by 113 to 116 (SLLP).

Belongs to the Fmt family.

It carries out the reaction L-methionyl-tRNA(fMet) + (6R)-10-formyltetrahydrofolate = N-formyl-L-methionyl-tRNA(fMet) + (6S)-5,6,7,8-tetrahydrofolate + H(+). In terms of biological role, attaches a formyl group to the free amino group of methionyl-tRNA(fMet). The formyl group appears to play a dual role in the initiator identity of N-formylmethionyl-tRNA by promoting its recognition by IF2 and preventing the misappropriation of this tRNA by the elongation apparatus. This is Methionyl-tRNA formyltransferase from Stutzerimonas stutzeri (strain A1501) (Pseudomonas stutzeri).